The following is a 361-amino-acid chain: UDP-3-O-acylglucosamine N-acyltransferase (361 aa).

The active-site Proton acceptor is the His-258.

It belongs to the transferase hexapeptide repeat family. LpxD subfamily. As to quaternary structure, homotrimer.

The enzyme catalyses a UDP-3-O-[(3R)-3-hydroxyacyl]-alpha-D-glucosamine + a (3R)-hydroxyacyl-[ACP] = a UDP-2-N,3-O-bis[(3R)-3-hydroxyacyl]-alpha-D-glucosamine + holo-[ACP] + H(+). The protein operates within bacterial outer membrane biogenesis; LPS lipid A biosynthesis. Its function is as follows. Catalyzes the N-acylation of UDP-3-O-acylglucosamine using 3-hydroxyacyl-ACP as the acyl donor. Is involved in the biosynthesis of lipid A, a phosphorylated glycolipid that anchors the lipopolysaccharide to the outer membrane of the cell. This Nitrobacter hamburgensis (strain DSM 10229 / NCIMB 13809 / X14) protein is UDP-3-O-acylglucosamine N-acyltransferase.